The following is a 424-amino-acid chain: Probable carboxypeptidase AN5749 (424 aa).

An N-terminal signal peptide occupies residues 1–17; it reads MNLSILAALALVSFSTA. Residue asparagine 58 is glycosylated (N-linked (GlcNAc...) asparagine). Aspartate 139 provides a ligand contact to Zn(2+). Glutamate 171 acts as the Proton acceptor in catalysis. Glutamate 172 contributes to the Zn(2+) binding site. Asparagine 184 and asparagine 323 each carry an N-linked (GlcNAc...) asparagine glycan.

This sequence belongs to the peptidase M20A family. It depends on Zn(2+) as a cofactor.

It localises to the secreted. The sequence is that of Probable carboxypeptidase AN5749 from Emericella nidulans (strain FGSC A4 / ATCC 38163 / CBS 112.46 / NRRL 194 / M139) (Aspergillus nidulans).